The following is a 553-amino-acid chain: HTH-type transcriptional regulator SgrR (553 aa).

The HTH marR-type domain occupies 1–113 (MSTSRLQQQF…RQMLLSQLGR (113 aa)). A DNA-binding region (H-T-H motif) is located at residues 26–49 (LQALAEVLNCSRRHVRSLLGKMQH). The solute-binding stretch occupies residues 163 to 494 (ELEPDLSHHW…EELHQDIESW (332 aa)).

In terms of biological role, activates the small RNA gene sgrS under glucose-phosphate stress conditions as well as yfdZ. Represses its own transcription under both stress and non-stress conditions. Might act as a sensor of the intracellular accumulation of phosphoglucose by binding these molecules in its C-terminal solute-binding domain. This chain is HTH-type transcriptional regulator SgrR, found in Yersinia pestis bv. Antiqua (strain Antiqua).